A 322-amino-acid polypeptide reads, in one-letter code: Deoxyhypusine hydroxylase (322 aa).

HEAT-like PBS-type repeat units lie at residues 76-102 (LKHE…VLAD) and 109-135 (VRHE…YFKE). The Fe cation site is built by His-78, Glu-79, His-111, Glu-112, His-236, Glu-237, His-269, and Glu-270. Residues 267 to 293 (VRHEAAEALGSIATDDVLPVLKEHLKD) form an HEAT-like PBS-type 3 repeat.

This sequence belongs to the deoxyhypusine hydroxylase family. Fe(2+) is required as a cofactor.

Its subcellular location is the cytoplasm. The protein resides in the nucleus. The catalysed reaction is [eIF5A protein]-deoxyhypusine + AH2 + O2 = [eIF5A protein]-hypusine + A + H2O. Its pathway is protein modification; eIF5A hypusination. Functionally, catalyzes the hydroxylation of the N(6)-(4-aminobutyl)-L-lysine intermediate to form hypusine, an essential post-translational modification only found in mature eIF-5A factor. This Kluyveromyces lactis (strain ATCC 8585 / CBS 2359 / DSM 70799 / NBRC 1267 / NRRL Y-1140 / WM37) (Yeast) protein is Deoxyhypusine hydroxylase.